A 245-amino-acid polypeptide reads, in one-letter code: 1-acyl-sn-glycerol-3-phosphate acyltransferase (245 aa).

Met1 carries the N-formylmethionine modification. The HXXXXD motif signature appears at 73–78; that stretch reads HQNNYD.

It belongs to the 1-acyl-sn-glycerol-3-phosphate acyltransferase family.

It is found in the cell inner membrane. The catalysed reaction is a 1-acyl-sn-glycero-3-phosphate + an acyl-CoA = a 1,2-diacyl-sn-glycero-3-phosphate + CoA. The enzyme catalyses a fatty acyl-[ACP] + a 1-acyl-sn-glycero-3-phosphate = a 1,2-diacyl-sn-glycero-3-phosphate + holo-[ACP]. Its pathway is phospholipid metabolism; CDP-diacylglycerol biosynthesis; CDP-diacylglycerol from sn-glycerol 3-phosphate: step 2/3. Converts lysophosphatidic acid (LPA) into phosphatidic acid by incorporating an acyl moiety at the 2 position. This enzyme can utilize either acyl-CoA or acyl-ACP as the fatty acyl donor. The polypeptide is 1-acyl-sn-glycerol-3-phosphate acyltransferase (plsC) (Escherichia coli (strain K12)).